Consider the following 148-residue polypeptide: MDTPNKDDSIIRFSVSLQQNLLDELDNRIIKNGYSSRSELVRDMIREKLVEDNWAEDNPNDESKIAVLVVIYDHHQRELNQRMIDIQHASGTHVLCTTHIHMDEHNCLETIILQGNSFEIQRLQLEIGGLRGVKFAKLTKASSFEHNE.

Residues His-88, His-99, His-101, and Cys-107 each coordinate Ni(2+).

Belongs to the transcriptional regulatory CopG/NikR family. It depends on Ni(2+) as a cofactor.

Its function is as follows. Transcriptional regulator. The chain is Putative nickel-responsive regulator from Helicobacter pylori (strain G27).